The sequence spans 89 residues: Small ribosomal subunit protein uS15 (89 aa).

This sequence belongs to the universal ribosomal protein uS15 family. As to quaternary structure, part of the 30S ribosomal subunit. Forms a bridge to the 50S subunit in the 70S ribosome, contacting the 23S rRNA.

In terms of biological role, one of the primary rRNA binding proteins, it binds directly to 16S rRNA where it helps nucleate assembly of the platform of the 30S subunit by binding and bridging several RNA helices of the 16S rRNA. Its function is as follows. Forms an intersubunit bridge (bridge B4) with the 23S rRNA of the 50S subunit in the ribosome. The polypeptide is Small ribosomal subunit protein uS15 (Bdellovibrio bacteriovorus (strain ATCC 15356 / DSM 50701 / NCIMB 9529 / HD100)).